Consider the following 291-residue polypeptide: uncharacterized protein (291 aa).

The next 6 membrane-spanning stretches (helical) occupy residues 13-33 (FDLFFAAIACICGILKVMEMG), 40-60 (LGTVSKNGMAVLAVLVALGFL), 81-101 (GFLNPCVILSVIEFFMMLICI), 128-148 (FGLFGAIFMPYIFAECIRLLL), 158-178 (VILGILVLGCLAMAGLAYLEY), and 220-240 (GNVWMYLAMFASFTLVLILLA). The N-linked (GlcNAc...) asparagine glycan is linked to asparagine 249. The interval 269–291 (MASEDPPKDPLPRQEGGGGDTIA) is disordered.

It is found in the membrane. This is an uncharacterized protein from Encephalitozoon cuniculi (strain GB-M1) (Microsporidian parasite).